Consider the following 278-residue polypeptide: HAUS augmin-like complex subunit 1 (278 aa).

Coiled coils occupy residues 49–79 (RDVY…LMES), 124–177 (SDLF…KVDN), and 249–277 (SLAQ…DMME).

The protein belongs to the HAUS1 family. Component of the HAUS augmin-like complex. The complex interacts with the gamma-tubulin ring complex and this interaction is required for spindle assembly. Associates with microtubules. The interaction with microtubules is strong during mitosis, while it is weak or absent during interphase. It is unclear whether this interaction is direct or indirect. Interacts with EML3 (phosphorylated at 'Thr-881'). Widely expressed. Expressed in pancreas, kidney, skeletal muscle, liver and heart. Weakly expressed in lung, brain and placenta.

The protein localises to the cytoplasm. It is found in the cytoskeleton. Its subcellular location is the microtubule organizing center. It localises to the centrosome. The protein resides in the spindle. The protein localises to the spindle pole. Functionally, contributes to mitotic spindle assembly, maintenance of centrosome integrity and completion of cytokinesis as part of the HAUS augmin-like complex. The sequence is that of HAUS augmin-like complex subunit 1 (HAUS1) from Homo sapiens (Human).